The chain runs to 38 residues: Histatin-1 (38 aa).

Residues 1 to 38 (DSHEERHHGRHGHHKYGRKFHEKHHSHRGYRSNYLYDN) form a disordered region. Ser-2 carries the post-translational modification Phosphoserine. Residues 8-30 (HGRHGHHKYGRKFHEKHHSHRGY) are compositionally biased toward basic residues.

It belongs to the histatin/statherin family.

It is found in the secreted. Histatins (Hsts) are cationic and histidine-rich secreted peptides mainly synthesized by saliva glands of humans and higher primates. Hsts are considered to be major precursors of the protective proteinaceous structure on tooth surfaces (enamel pellicle). The polypeptide is Histatin-1 (HTN1) (Macaca fascicularis (Crab-eating macaque)).